A 387-amino-acid polypeptide reads, in one-letter code: MLPDGVADVLFEDAHKQEVLRHQLTQQLITHGYQLVSPPMIEFTESLLSGASEDLKRQTFKIIDQLTGRLMGIRADITPQILRIDAHHGGDGIARYCYAGDVIHTLPSGLFGSRTPLQLGAEIFGCESIAADIELIDVLFSMINSLDMSAVLHVDLGHVTIFKRLAELAALSASDTEQLMQLYANKNLPELKQVCQVLPMGSDFYTLARFGHDIANLLGRLSENAQQDTKIVTAIDELQRLKAHLQVQWQCAVSIDVTELSGYHYHTGIVFNGYINSETQPLVRGGRFDGMKSNQLATNQPRQATGFSMDVSRLLAHTQLDAPFIVLIDYDAFNNLDSAQRQLLLQQVASLRQQGYRVTMPLTAEDMPVGLTHRLSLADNQWRLHAV.

It belongs to the class-II aminoacyl-tRNA synthetase family. HisZ subfamily. Heteromultimer composed of HisG and HisZ subunits.

It is found in the cytoplasm. It participates in amino-acid biosynthesis; L-histidine biosynthesis; L-histidine from 5-phospho-alpha-D-ribose 1-diphosphate: step 1/9. In terms of biological role, required for the first step of histidine biosynthesis. May allow the feedback regulation of ATP phosphoribosyltransferase activity by histidine. The chain is ATP phosphoribosyltransferase regulatory subunit from Psychrobacter arcticus (strain DSM 17307 / VKM B-2377 / 273-4).